Consider the following 172-residue polypeptide: Small ribosomal subunit protein uS5 (172 aa).

One can recognise an S5 DRBM domain in the interval 17 to 80 (LREKMIAINR…EEARRNLAKI (64 aa)).

This sequence belongs to the universal ribosomal protein uS5 family. Part of the 30S ribosomal subunit. Contacts proteins S4 and S8.

In terms of biological role, with S4 and S12 plays an important role in translational accuracy. Located at the back of the 30S subunit body where it stabilizes the conformation of the head with respect to the body. The sequence is that of Small ribosomal subunit protein uS5 from Variovorax paradoxus (strain S110).